The sequence spans 143 residues: Spliceosomal protein DIB1 (143 aa).

This sequence belongs to the DIM1 family. Component of the 25S [U4/U6.U5] tri-snRNP.

The protein resides in the nucleus. Functionally, essential role in pre-mRNA splicing. Also essential for entry into mitosis (G2/M progression) as well as for chromosome segregation during mitosis. In Eremothecium gossypii (strain ATCC 10895 / CBS 109.51 / FGSC 9923 / NRRL Y-1056) (Yeast), this protein is Spliceosomal protein DIB1 (DIB1).